We begin with the raw amino-acid sequence, 210 residues long: DNA dC-&gt;dU-editing enzyme APOBEC-3H (210 aa).

Positions 4–126 (LTAKTFSLQF…PNYQEGLLLL (123 aa)) constitute a CMP/dCMP-type deaminase domain. Histidine 54 is a Zn(2+) binding site. The active-site Proton donor is the glutamate 56. Residues cysteine 85 and cysteine 88 each coordinate Zn(2+). The necessary and sufficient for localization to the cytoplasm stretch occupies residues 182-210 (SRSVDVLENGLRSLQLGPVTPSSSIRNSR).

Belongs to the cytidine and deoxycytidylate deaminase family. As to quaternary structure, homodimer. The cofactor is Zn(2+).

The protein resides in the cytoplasm. It carries out the reaction a 2'-deoxycytidine in single-stranded DNA + H2O + H(+) = a 2'-deoxyuridine in single-stranded DNA + NH4(+). Antiviral activity is neutralized by the simian immunodeficiency virus rhesus (SIV-mac) virion infectivity factor (VIF). Functionally, DNA deaminase (cytidine deaminase) which acts as an inhibitor of retrovirus replication and retrotransposon mobility via deaminase-dependent and -independent mechanisms. Exhibits antiviral activity against vif-deficient HIV-1. After the penetration of retroviral nucleocapsids into target cells of infection and the initiation of reverse transcription, it can induce the conversion of cytosine to uracil in the minus-sense single-strand viral DNA, leading to G-to-A hypermutations in the subsequent plus-strand viral DNA. The resultant detrimental levels of mutations in the proviral genome, along with a deamination-independent mechanism that works prior to the proviral integration, together exert efficient antiretroviral effects in infected target cells. Selectively targets single-stranded DNA and does not deaminate double-stranded DNA or single- or double-stranded RNA. The sequence is that of DNA dC-&gt;dU-editing enzyme APOBEC-3H from Macaca mulatta (Rhesus macaque).